Consider the following 140-residue polypeptide: Required for drug-induced death protein 1 (140 aa).

Residues 1–95 form a disordered region; that stretch reads MTVGARLRSK…DKPKKRYRRK (95 aa). Residues 29–53 show a composition bias toward acidic residues; sequence EETDAIVEHLEGEDEDPESQDCERE. The helical transmembrane segment at 118–140 threads the bilayer; that stretch reads LQGFAAAYSAPFGVATSVVSFVR.

Its subcellular location is the membrane. Its function is as follows. Regulates drug efflux through modulation of ABCB1 localization and activity. This chain is Required for drug-induced death protein 1, found in Rattus norvegicus (Rat).